We begin with the raw amino-acid sequence, 41 residues long: Large ribosomal subunit protein bL36 (41 aa).

Belongs to the bacterial ribosomal protein bL36 family.

The sequence is that of Large ribosomal subunit protein bL36 from Sinorhizobium fredii (strain NBRC 101917 / NGR234).